We begin with the raw amino-acid sequence, 278 residues long: Pantothenate synthetase (278 aa).

26-33 (MGNLHEGH) is an ATP binding site. Histidine 33 functions as the Proton donor in the catalytic mechanism. Glutamine 57 contributes to the (R)-pantoate binding site. Position 57 (glutamine 57) interacts with beta-alanine. 144–147 (GKKD) contacts ATP. Glutamine 150 contacts (R)-pantoate. ATP is bound by residues glycine 173 and 181–184 (LSSR).

Belongs to the pantothenate synthetase family. Homodimer.

The protein localises to the cytoplasm. It carries out the reaction (R)-pantoate + beta-alanine + ATP = (R)-pantothenate + AMP + diphosphate + H(+). Its pathway is cofactor biosynthesis; (R)-pantothenate biosynthesis; (R)-pantothenate from (R)-pantoate and beta-alanine: step 1/1. Catalyzes the condensation of pantoate with beta-alanine in an ATP-dependent reaction via a pantoyl-adenylate intermediate. In Neisseria meningitidis serogroup C / serotype 2a (strain ATCC 700532 / DSM 15464 / FAM18), this protein is Pantothenate synthetase.